We begin with the raw amino-acid sequence, 81 residues long: MDATVSAASVIAAALAVGLAAIGPGIGQGTAAGQAVEGIARQPEVDGKIRGTLLLSLAFMEALTIYGLVVALALLFANPFV.

Helical transmembrane passes span Ala7–Gly27 and Leu57–Ala77.

The protein belongs to the ATPase C chain family. As to quaternary structure, F-type ATPases have 2 components, F(1) - the catalytic core - and F(0) - the membrane proton channel. F(1) has five subunits: alpha(3), beta(3), gamma(1), delta(1), epsilon(1). F(0) has four main subunits: a(1), b(1), b'(1) and c(10-14). The alpha and beta chains form an alternating ring which encloses part of the gamma chain. F(1) is attached to F(0) by a central stalk formed by the gamma and epsilon chains, while a peripheral stalk is formed by the delta, b and b' chains.

It is found in the plastid. Its subcellular location is the cyanelle thylakoid membrane. Its function is as follows. F(1)F(0) ATP synthase produces ATP from ADP in the presence of a proton or sodium gradient. F-type ATPases consist of two structural domains, F(1) containing the extramembraneous catalytic core and F(0) containing the membrane proton channel, linked together by a central stalk and a peripheral stalk. During catalysis, ATP synthesis in the catalytic domain of F(1) is coupled via a rotary mechanism of the central stalk subunits to proton translocation. Functionally, key component of the F(0) channel; it plays a direct role in translocation across the membrane. A homomeric c-ring of between 10-14 subunits forms the central stalk rotor element with the F(1) delta and epsilon subunits. This is ATP synthase subunit C, cyanelle from Cyanophora paradoxa.